A 203-amino-acid polypeptide reads, in one-letter code: 2-phospho-L-lactate guanylyltransferase (203 aa).

The protein belongs to the CofC family. In terms of assembly, homodimer.

It carries out the reaction (2S)-2-phospholactate + GTP + H(+) = (2S)-lactyl-2-diphospho-5'-guanosine + diphosphate. The protein operates within cofactor biosynthesis; coenzyme F420 biosynthesis. In terms of biological role, guanylyltransferase that catalyzes the activation of (2S)-2-phospholactate (2-PL) as (2S)-lactyl-2-diphospho-5'-guanosine, via the condensation of 2-PL with GTP. It is involved in the biosynthesis of coenzyme F420, a hydride carrier cofactor. The polypeptide is 2-phospho-L-lactate guanylyltransferase (Halomicrobium mukohataei (strain ATCC 700874 / DSM 12286 / JCM 9738 / NCIMB 13541) (Haloarcula mukohataei)).